Reading from the N-terminus, the 418-residue chain is Beta-arrestin-1 (418 aa).

The interval 1–163 (MGDKGTRVFK…LEEKIHKRNS (163 aa)) is interaction with SRC. The segment at 45–86 (PEYLKERRVYVTLTCAFRYGREDLDVLGLTFRKDLFVANVQS) is interaction with CHRM2. Tyr47 carries the post-translational modification Phosphotyrosine. 1D-myo-inositol hexakisphosphate-binding residues include Lys250, Met255, Lys324, and Lys326. The tract at residues 318–418 (IVSYKVKVKL…GTGSPHLNNR (101 aa)) is interaction with TRAF6. Disordered regions lie at residues 353–375 (HPKP…VDTN) and 397–418 (KGMK…LNNR). Basic and acidic residues predominate over residues 355-366 (KPKEEPPHREVP). Ser412 carries the phosphoserine modification.

This sequence belongs to the arrestin family. Monomer. Homodimer. Homooligomer; the self-association is mediated by InsP6-binding. Heterooligomer with ARRB2; the association is mediated by InsP6-binding. Interacts with ADRB2 (phosphorylated). Interacts with CHRM2 (phosphorylated). Interacts with LHCGR. Interacts with CYTH2 and CASR. Interacts with AP2B1 (dephosphorylated); phosphorylation of AP2B1 disrupts the interaction. Interacts (dephosphorylated at Ser-412) with CLTC. Interacts with CCR2 and GRK2. Interacts with CRR5. Interacts with PTAFR (phosphorylated on serine residues). Interacts with CLTC and MAP2K3. Interacts with CREB1. Interacts with TRAF6. Interacts with IGF1R and MDM2. Interacts with C5AR1. Interacts with PDE4D. Interacts with SRC (via the SH3 domain and the protein kinase domain); the interaction is independent of the phosphorylation state of SRC C-terminus. Interacts with TACR1. Interacts with RAF1. Interacts with DVL1; the interaction is enhanced by phosphorylation of DVL1. Interacts with DVL2; the interaction is enhanced by phosphorylation of DVL2. Interacts with IGF1R. Interacts with CHUK, IKBKB and MAP3K14. Associates with MAP kinase p38. Part of a MAPK signaling complex consisting of TACR1, ARRB1, SRC, MAPK1 (activated) and MAPK3 (activated). Part of a MAPK signaling complex consisting of F2RL1, ARRB1, RAF1, MAPK1 (activated) and MAPK3 (activated). Interacts with GPR143. Interacts with MAP2K4/MKK4. Interacts with HCK and CXCR1 (phosphorylated). Interacts with ACKR3 and ACKR4. Interacts with ARRDC1; the interaction is direct. Interacts with GPR61, GPR62 and GPR135. Constitutively phosphorylated at in the cytoplasm. At the plasma membrane, is rapidly dephosphorylated, a process that is required for clathrin binding and ADRB2 endocytosis but not for ADRB2 binding and desensitization. Once internalized, is rephosphorylated. Post-translationally, the ubiquitination status appears to regulate the formation and trafficking of beta-arrestin-GPCR complexes and signaling. Ubiquitination appears to occur GPCR-specific. Ubiquitinated by MDM2; the ubiquitination is required for rapid internalization of ADRB2. Deubiquitinated by USP33; the deubiquitination leads to a dissociation of the beta-arrestin-GPCR complex. Stimulation of a class A GPCR, such as ADRB2, induces transient ubiquitination and subsequently promotes association with USP33.

Its subcellular location is the cytoplasm. The protein resides in the nucleus. It localises to the cell membrane. It is found in the membrane. The protein localises to the clathrin-coated pit. Its subcellular location is the cell projection. The protein resides in the pseudopodium. It localises to the cytoplasmic vesicle. In terms of biological role, functions in regulating agonist-mediated G-protein coupled receptor (GPCR) signaling by mediating both receptor desensitization and resensitization processes. During homologous desensitization, beta-arrestins bind to the GPRK-phosphorylated receptor and sterically preclude its coupling to the cognate G-protein; the binding appears to require additional receptor determinants exposed only in the active receptor conformation. The beta-arrestins target many receptors for internalization by acting as endocytic adapters (CLASPs, clathrin-associated sorting proteins) and recruiting the GPRCs to the adapter protein 2 complex 2 (AP-2) in clathrin-coated pits (CCPs). However, the extent of beta-arrestin involvement appears to vary significantly depending on the receptor, agonist and cell type. Internalized arrestin-receptor complexes traffic to intracellular endosomes, where they remain uncoupled from G-proteins. Two different modes of arrestin-mediated internalization occur. Class A receptors, like ADRB2, OPRM1, ENDRA, D1AR and ADRA1B dissociate from beta-arrestin at or near the plasma membrane and undergo rapid recycling. Class B receptors, like AVPR2, AGTR1, NTSR1, TRHR and TACR1 internalize as a complex with arrestin and traffic with it to endosomal vesicles, presumably as desensitized receptors, for extended periods of time. Receptor resensitization then requires that receptor-bound arrestin is removed so that the receptor can be dephosphorylated and returned to the plasma membrane. Involved in internalization of P2RY4 and UTP-stimulated internalization of P2RY2. Involved in phosphorylation-dependent internalization of OPRD1 ands subsequent recycling. Involved in the degradation of cAMP by recruiting cAMP phosphodiesterases to ligand-activated receptors. Beta-arrestins function as multivalent adapter proteins that can switch the GPCR from a G-protein signaling mode that transmits short-lived signals from the plasma membrane via small molecule second messengers and ion channels to a beta-arrestin signaling mode that transmits a distinct set of signals that are initiated as the receptor internalizes and transits the intracellular compartment. Acts as a signaling scaffold for MAPK pathways such as MAPK1/3 (ERK1/2). ERK1/2 activated by the beta-arrestin scaffold is largely excluded from the nucleus and confined to cytoplasmic locations such as endocytic vesicles, also called beta-arrestin signalosomes. Recruits c-Src/SRC to ADRB2 resulting in ERK activation. GPCRs for which the beta-arrestin-mediated signaling relies on both ARRB1 and ARRB2 (codependent regulation) include ADRB2, F2RL1 and PTH1R. For some GPCRs the beta-arrestin-mediated signaling relies on either ARRB1 or ARRB2 and is inhibited by the other respective beta-arrestin form (reciprocal regulation). Inhibits ERK1/2 signaling in AGTR1- and AVPR2-mediated activation (reciprocal regulation). Is required for SP-stimulated endocytosis of NK1R and recruits c-Src/SRC to internalized NK1R resulting in ERK1/2 activation, which is required for the antiapoptotic effects of SP. Is involved in proteinase-activated F2RL1-mediated ERK activity. Acts as a signaling scaffold for the AKT1 pathway. Is involved in alpha-thrombin-stimulated AKT1 signaling. Is involved in IGF1-stimulated AKT1 signaling leading to increased protection from apoptosis. Involved in activation of the p38 MAPK signaling pathway and in actin bundle formation. Involved in F2RL1-mediated cytoskeletal rearrangement and chemotaxis. Involved in AGTR1-mediated stress fiber formation by acting together with GNAQ to activate RHOA. Appears to function as signaling scaffold involved in regulation of MIP-1-beta-stimulated CCR5-dependent chemotaxis. Involved in attenuation of NF-kappa-B-dependent transcription in response to GPCR or cytokine stimulation by interacting with and stabilizing CHUK. May serve as nuclear messenger for GPCRs. Involved in OPRD1-stimulated transcriptional regulation by translocating to CDKN1B and FOS promoter regions and recruiting EP300 resulting in acetylation of histone H4. Involved in regulation of LEF1 transcriptional activity via interaction with DVL1 and/or DVL2 Also involved in regulation of receptors other than GPCRs. Involved in Toll-like receptor and IL-1 receptor signaling through the interaction with TRAF6 which prevents TRAF6 autoubiquitination and oligomerization required for activation of NF-kappa-B and JUN. Involved in IL8-mediated granule release in neutrophils. Binds phosphoinositides. Binds inositolhexakisphosphate (InsP6). Required for atypical chemokine receptor ACKR2-induced RAC1-LIMK1-PAK1-dependent phosphorylation of cofilin (CFL1) and for the up-regulation of ACKR2 from endosomal compartment to cell membrane, increasing its efficiency in chemokine uptake and degradation. Involved in the internalization of the atypical chemokine receptor ACKR3. Negatively regulates the NOTCH signaling pathway by mediating the ubiquitination and degradation of NOTCH1 by ITCH. Participates in the recruitment of the ubiquitin-protein ligase to the receptor. The protein is Beta-arrestin-1 (Arrb1) of Mus musculus (Mouse).